Consider the following 941-residue polypeptide: ATP-dependent 6-phosphofructokinase subunit beta (941 aa).

Residues 2–558 form an N-terminal catalytic PFK domain 1 region; it reads PDASLFNGTS…HMKNFISTNS (557 aa). Residues Gly191, 255 to 256, and 285 to 288 each bind ATP; these read RC and GDGS. Position 286 (Asp286) interacts with Mg(2+). Beta-D-fructose 6-phosphate-binding positions include 331–333, Arg368, 375–377, Glu432, Arg460, and 466–469; these read SID, MGR, and HVQR. The active-site Proton acceptor is the Asp333. Positions 559–572 are interdomain linker; that stretch reads ADHVPPSLPLEKRK. The segment at 573–941 is C-terminal regulatory PFK domain 2; that stretch reads KVAIINVGAP…SDMLSGRTSL (369 aa). Beta-D-fructose 2,6-bisphosphate contacts are provided by residues Arg643, 701–705, Arg739, 746–748, Glu806, Lys832, 838–841, and Arg918; these read TISNN, QGG, and HVQQ.

The protein belongs to the phosphofructokinase type A (PFKA) family. ATP-dependent PFK group I subfamily. Eukaryotic two domain clade 'E' sub-subfamily. Heterododecamer of 4 alpha, 4 beta and 4 gamma chains. The gamma chain bridges the N-terminal halves of the alpha and beta subunits. Mg(2+) serves as cofactor.

Its subcellular location is the cytoplasm. The catalysed reaction is beta-D-fructose 6-phosphate + ATP = beta-D-fructose 1,6-bisphosphate + ADP + H(+). Its pathway is carbohydrate degradation; glycolysis; D-glyceraldehyde 3-phosphate and glycerone phosphate from D-glucose: step 3/4. With respect to regulation, allosterically activated by ADP, AMP, or fructose 2,6-bisphosphate, and allosterically inhibited by ATP or citrate. In terms of biological role, catalyzes the phosphorylation of D-fructose 6-phosphate to fructose 1,6-bisphosphate by ATP, the first committing step of glycolysis. The chain is ATP-dependent 6-phosphofructokinase subunit beta (PFK2) from Komagataella phaffii (strain GS115 / ATCC 20864) (Yeast).